Consider the following 85-residue polypeptide: Small ribosomal subunit protein uS17 (85 aa).

Belongs to the universal ribosomal protein uS17 family. In terms of assembly, part of the 30S ribosomal subunit.

In terms of biological role, one of the primary rRNA binding proteins, it binds specifically to the 5'-end of 16S ribosomal RNA. The polypeptide is Small ribosomal subunit protein uS17 (Desulfosudis oleivorans (strain DSM 6200 / JCM 39069 / Hxd3) (Desulfococcus oleovorans)).